Here is a 342-residue protein sequence, read N- to C-terminus: Biotin synthase (342 aa).

Residues 55-274 (NAVQCNQLLN…IALARIMMPK (220 aa)) enclose the Radical SAM core domain. Residues C70, C74, and C77 each coordinate [4Fe-4S] cluster. Residues C114, C145, C205, and R278 each contribute to the [2Fe-2S] cluster site.

This sequence belongs to the radical SAM superfamily. Biotin synthase family. In terms of assembly, homodimer. [4Fe-4S] cluster serves as cofactor. It depends on [2Fe-2S] cluster as a cofactor.

The catalysed reaction is (4R,5S)-dethiobiotin + (sulfur carrier)-SH + 2 reduced [2Fe-2S]-[ferredoxin] + 2 S-adenosyl-L-methionine = (sulfur carrier)-H + biotin + 2 5'-deoxyadenosine + 2 L-methionine + 2 oxidized [2Fe-2S]-[ferredoxin]. Its pathway is cofactor biosynthesis; biotin biosynthesis; biotin from 7,8-diaminononanoate: step 2/2. In terms of biological role, catalyzes the conversion of dethiobiotin (DTB) to biotin by the insertion of a sulfur atom into dethiobiotin via a radical-based mechanism. In Rhodopseudomonas palustris (strain BisB5), this protein is Biotin synthase.